Consider the following 270-residue polypeptide: Putative phosphoenolpyruvate synthase regulatory protein (270 aa).

150–157 (GVSRCGKT) lines the ADP pocket.

The protein belongs to the pyruvate, phosphate/water dikinase regulatory protein family. PSRP subfamily.

The enzyme catalyses [pyruvate, water dikinase] + ADP = [pyruvate, water dikinase]-phosphate + AMP + H(+). It carries out the reaction [pyruvate, water dikinase]-phosphate + phosphate + H(+) = [pyruvate, water dikinase] + diphosphate. In terms of biological role, bifunctional serine/threonine kinase and phosphorylase involved in the regulation of the phosphoenolpyruvate synthase (PEPS) by catalyzing its phosphorylation/dephosphorylation. This Aeromonas salmonicida (strain A449) protein is Putative phosphoenolpyruvate synthase regulatory protein.